An 811-amino-acid polypeptide reads, in one-letter code: Methionine--tRNA ligase (811 aa).

The short motif at 11-21 is the 'HIGH' region element; that stretch reads PYVNNVPHLGN. Zn(2+)-binding residues include Cys-142, Cys-145, Cys-155, and Cys-158. The 'KMSKS' region motif lies at 344–348; sequence KFSKS. Lys-347 provides a ligand contact to ATP. A disordered region spans residues 606-640; it reads GVSVPRTAQMPTGMNKKETDAQQKKEEREMPPPSD. Positions 620-635 are enriched in basic and acidic residues; the sequence is NKKETDAQQKKEEREM. The 106-residue stretch at 648–753 folds into the tRNA-binding domain; sequence FSERVVLKVA…PWALPGERAT (106 aa).

This sequence belongs to the class-I aminoacyl-tRNA synthetase family. MetG type 1 subfamily. In terms of assembly, homodimer. Requires Zn(2+) as cofactor.

It localises to the cytoplasm. It catalyses the reaction tRNA(Met) + L-methionine + ATP = L-methionyl-tRNA(Met) + AMP + diphosphate. Is required not only for elongation of protein synthesis but also for the initiation of all mRNA translation through initiator tRNA(fMet) aminoacylation. The sequence is that of Methionine--tRNA ligase from Treponema pallidum (strain Nichols).